The sequence spans 231 residues: MGQMVEFEKNGVKVRGYIATPKWGGPGVIVIHEWWGLESPLSNIKEICDRFAQEGFVAFAPDFYEGKYADNPDDAGKLMTDMFENRMDKVDAIFKASVDFLKECRYTSPKKVGVTGFCCGGTLSMYFAGKFPDLIDASVPFYGLPQITKIDAENIKVPIFFILAEKDEFVNNDEVIDIAKKVWKNGVDVKVKVYSGVTHAFLNEKREDVYDPCRAQDAWNLTVAFFKEYLT.

The chain is Protein usf (usf) from Aquifex pyrophilus.